Here is a 275-residue protein sequence, read N- to C-terminus: Undecaprenyl-diphosphatase (275 aa).

7 helical membrane-spanning segments follow: residues 8 to 28, 45 to 65, 92 to 112, 119 to 139, 197 to 217, 225 to 245, and 255 to 275; these read WTIV…PIPI, ARGL…VLII, FMFV…GVLF, FIGE…AAAI, FSFL…IPNI, ELWI…YFAL, and GNLK…LIFL.

It belongs to the UppP family.

It localises to the cell membrane. It catalyses the reaction di-trans,octa-cis-undecaprenyl diphosphate + H2O = di-trans,octa-cis-undecaprenyl phosphate + phosphate + H(+). Its function is as follows. Catalyzes the dephosphorylation of undecaprenyl diphosphate (UPP). Confers resistance to bacitracin. The protein is Undecaprenyl-diphosphatase of Oceanobacillus iheyensis (strain DSM 14371 / CIP 107618 / JCM 11309 / KCTC 3954 / HTE831).